A 263-amino-acid chain; its full sequence is Tryptophan synthase alpha chain (263 aa).

Active-site proton acceptor residues include Glu47 and Asp58.

Belongs to the TrpA family. As to quaternary structure, tetramer of two alpha and two beta chains.

The protein resides in the plastid. Its subcellular location is the chloroplast. The enzyme catalyses (1S,2R)-1-C-(indol-3-yl)glycerol 3-phosphate + L-serine = D-glyceraldehyde 3-phosphate + L-tryptophan + H2O. It participates in amino-acid biosynthesis; L-tryptophan biosynthesis; L-tryptophan from chorismate: step 5/5. Its function is as follows. The alpha subunit is responsible for the aldol cleavage of indoleglycerol phosphate to indole and glyceraldehyde 3-phosphate. This is Tryptophan synthase alpha chain from Antithamnion sp. (Red alga).